We begin with the raw amino-acid sequence, 128 residues long: Cyclin-dependent protein kinase inhibitor SMR1 (128 aa).

Residues 17–74 (PIKIRSKTSKTKKDEGDDDEDDLRCSTPTSQEHKIPAVVDSPPPPPRKPRPPPSAPSA) form a disordered region. Pro residues predominate over residues 57-71 (SPPPPPRKPRPPPSA).

As to quaternary structure, interacts with CDKB1-1. Interacts with CPR5. As to expression, expressed in roots, leaves, stems, siliques and flowers. Expressed in the root elongation zone.

It localises to the nucleus. Its function is as follows. Probable cyclin-dependent protein kinase (CDK) inhibitor that functions as a repressor of mitosis in the endoreduplication cell cycle. Cooperates with SIM and SMR2 to promote endoreplication during leaf development. Specifically regulates endoreduplication in epidermal pavement cells to produce the cell size pattern. Is necessary for giant cell formation. Positive regulator of effector-triggered immunity (ETI). The sequence is that of Cyclin-dependent protein kinase inhibitor SMR1 from Arabidopsis thaliana (Mouse-ear cress).